The primary structure comprises 79 residues: MAIKLKIKKGDTVKIIAGDDKGKTGEVLAVLPKEKKVIVKDCKVAKKTVKPDQEKNPEGGFVNKEMPIDISNVAKVEGE.

This sequence belongs to the universal ribosomal protein uL24 family. As to quaternary structure, part of the 50S ribosomal subunit.

Its function is as follows. One of two assembly initiator proteins, it binds directly to the 5'-end of the 23S rRNA, where it nucleates assembly of the 50S subunit. In terms of biological role, one of the proteins that surrounds the polypeptide exit tunnel on the outside of the subunit. The sequence is that of Large ribosomal subunit protein uL24 from Aliarcobacter butzleri (strain RM4018) (Arcobacter butzleri).